A 593-amino-acid polypeptide reads, in one-letter code: Probable 5'-nucleotidase (593 aa).

A signal peptide spans 1-21; the sequence is MKRFIPHRVIHAVCIGLALVG. Residue cysteine 22 is the site of N-palmitoyl cysteine attachment. The S-diacylglycerol cysteine moiety is linked to residue cysteine 22. A divalent metal cation-binding residues include aspartate 41, histidine 43, aspartate 91, asparagine 123, and histidine 224. Residues phenylalanine 456 and 539 to 545 contribute to the substrate site; that span reads YIARGKD.

It belongs to the 5'-nucleotidase family. A divalent metal cation is required as a cofactor.

It localises to the cell membrane. It carries out the reaction a ribonucleoside 5'-phosphate + H2O = a ribonucleoside + phosphate. The protein is Probable 5'-nucleotidase of Treponema pallidum (strain Nichols).